Consider the following 354-residue polypeptide: Protein Wnt-11 (354 aa).

Positions 1 to 24 (MKPSPQFFLAAFLSLILQTGICYG) are cleaved as a signal peptide. Residues asparagine 40 and asparagine 90 are each glycosylated (N-linked (GlcNAc...) asparagine). Cystine bridges form between cysteine 80–cysteine 91, cysteine 130–cysteine 138, cysteine 140–cysteine 157, cysteine 209–cysteine 223, cysteine 211–cysteine 218, cysteine 283–cysteine 314, cysteine 299–cysteine 309, cysteine 313–cysteine 353, cysteine 329–cysteine 344, cysteine 331–cysteine 341, and cysteine 336–cysteine 337. Residue serine 215 is the site of O-palmitoleoyl serine; by PORCN attachment. N-linked (GlcNAc...) asparagine glycans are attached at residues asparagine 300 and asparagine 304.

The protein belongs to the Wnt family. In terms of processing, palmitoleoylation is required for efficient binding to frizzled receptors. Depalmitoleoylation leads to Wnt signaling pathway inhibition. Expressed in the dermatome. The expression domain is mutually exclusive to the other Wnt genes.

It localises to the secreted. The protein localises to the extracellular space. The protein resides in the extracellular matrix. Its function is as follows. Ligand for members of the frizzled family of seven transmembrane receptors. May play a role in the formation of dermal structure, both limb and feather buds. Is likely to signal over only few cell diameters. The polypeptide is Protein Wnt-11 (WNT11) (Gallus gallus (Chicken)).